Consider the following 187-residue polypeptide: ATP synthase subunit b 2 (187 aa).

The chain crosses the membrane as a helical span at residues 39–61 (SQLVWLVLSFAALYLLMSRVALP).

This sequence belongs to the ATPase B chain family. In terms of assembly, F-type ATPases have 2 components, F(1) - the catalytic core - and F(0) - the membrane proton channel. F(1) has five subunits: alpha(3), beta(3), gamma(1), delta(1), epsilon(1). F(0) has three main subunits: a(1), b(2) and c(10-14). The alpha and beta chains form an alternating ring which encloses part of the gamma chain. F(1) is attached to F(0) by a central stalk formed by the gamma and epsilon chains, while a peripheral stalk is formed by the delta and b chains.

The protein localises to the cell inner membrane. Functionally, f(1)F(0) ATP synthase produces ATP from ADP in the presence of a proton or sodium gradient. F-type ATPases consist of two structural domains, F(1) containing the extramembraneous catalytic core and F(0) containing the membrane proton channel, linked together by a central stalk and a peripheral stalk. During catalysis, ATP synthesis in the catalytic domain of F(1) is coupled via a rotary mechanism of the central stalk subunits to proton translocation. Component of the F(0) channel, it forms part of the peripheral stalk, linking F(1) to F(0). The sequence is that of ATP synthase subunit b 2 from Parvibaculum lavamentivorans (strain DS-1 / DSM 13023 / NCIMB 13966).